Reading from the N-terminus, the 257-residue chain is Zinc import ATP-binding protein ZnuC (257 aa).

An ABC transporter domain is found at 5–220 (ITLKNVAVNF…PEFIAMFGHH (216 aa)). An ATP-binding site is contributed by 37–44 (GPNGAGKS).

The protein belongs to the ABC transporter superfamily. Zinc importer (TC 3.A.1.15.5) family. In terms of assembly, the complex is composed of two ATP-binding proteins (ZnuC), two transmembrane proteins (ZnuB) and a solute-binding protein (ZnuA).

Its subcellular location is the cell inner membrane. It catalyses the reaction Zn(2+)(out) + ATP(in) + H2O(in) = Zn(2+)(in) + ADP(in) + phosphate(in) + H(+)(in). In terms of biological role, part of the ABC transporter complex ZnuABC involved in zinc import. Responsible for energy coupling to the transport system. In Photorhabdus laumondii subsp. laumondii (strain DSM 15139 / CIP 105565 / TT01) (Photorhabdus luminescens subsp. laumondii), this protein is Zinc import ATP-binding protein ZnuC.